The following is a 156-amino-acid chain: Ribosomal RNA large subunit methyltransferase H (156 aa).

Residues Leu-73, Gly-104, and 123–128 (LSPLTL) contribute to the S-adenosyl-L-methionine site.

Belongs to the RNA methyltransferase RlmH family. Homodimer.

Its subcellular location is the cytoplasm. The catalysed reaction is pseudouridine(1915) in 23S rRNA + S-adenosyl-L-methionine = N(3)-methylpseudouridine(1915) in 23S rRNA + S-adenosyl-L-homocysteine + H(+). Functionally, specifically methylates the pseudouridine at position 1915 (m3Psi1915) in 23S rRNA. The polypeptide is Ribosomal RNA large subunit methyltransferase H (Yersinia pseudotuberculosis serotype O:1b (strain IP 31758)).